Consider the following 152-residue polypeptide: Protein IpgF (152 aa).

An N-terminal signal peptide occupies residues 1 to 17 (MSRFVFILLCFIPYLGR).

It belongs to the IagB/IpgF/P19 family.

The sequence is that of Protein IpgF (ipgF) from Shigella sonnei.